A 533-amino-acid chain; its full sequence is Retinoid isomerohydrolase (533 aa).

An N-acetylserine modification is found at Ser-2. Phosphothreonine occurs at positions 101 and 105. Cys-112 carries S-palmitoyl cysteine; in membrane form lipidation. The residue at position 113 (Lys-113) is an N6-acetyllysine. The residue at position 117 (Ser-117) is a Phosphoserine. His-180 is a binding site for Fe cation. Residue Cys-231 is the site of S-palmitoyl cysteine; in membrane form attachment. 2 residues coordinate Fe cation: His-241 and His-313. 2 S-palmitoyl cysteine; in membrane form lipidation sites follow: Cys-329 and Cys-330. His-527 lines the Fe cation pocket.

This sequence belongs to the carotenoid oxygenase family. As to quaternary structure, interacts with MYO7A; this mediates light-dependent intracellular transport of RPE65. Fe(2+) is required as a cofactor. Palmitoylation by LRAT regulates ligand binding specificity; the palmitoylated form (membrane form) specifically binds all-trans-retinyl-palmitate, while the soluble unpalmitoylated form binds all-trans-retinol (vitamin A). In terms of tissue distribution, retinal pigment epithelium specific.

It is found in the cytoplasm. The protein resides in the cell membrane. It localises to the microsome membrane. The enzyme catalyses an all-trans-retinyl ester + H2O = 11-cis-retinol + a fatty acid + H(+). It catalyses the reaction lutein = (3R,3'S)-zeaxanthin. The catalysed reaction is all-trans-retinyl hexadecanoate + H2O = 11-cis-retinol + hexadecanoate + H(+). Its function is as follows. Critical isomerohydrolase in the retinoid cycle involved in regeneration of 11-cis-retinal, the chromophore of rod and cone opsins. Catalyzes the cleavage and isomerization of all-trans-retinyl fatty acid esters to 11-cis-retinol which is further oxidized by 11-cis retinol dehydrogenase to 11-cis-retinal for use as visual chromophore. Essential for the production of 11-cis retinal for both rod and cone photoreceptors. Also capable of catalyzing the isomerization of lutein to meso-zeaxanthin an eye-specific carotenoid. The soluble form binds vitamin A (all-trans-retinol), making it available for LRAT processing to all-trans-retinyl ester. The membrane form, palmitoylated by LRAT, binds all-trans-retinyl esters, making them available for IMH (isomerohydrolase) processing to all-cis-retinol. The soluble form is regenerated by transferring its palmitoyl groups onto 11-cis-retinol, a reaction catalyzed by LRAT. The polypeptide is Retinoid isomerohydrolase (RPE65) (Bos taurus (Bovine)).